A 305-amino-acid polypeptide reads, in one-letter code: UDP-3-O-acyl-N-acetylglucosamine deacetylase (305 aa).

The Zn(2+) site is built by His-78, His-237, and Asp-241. His-264 functions as the Proton donor in the catalytic mechanism.

Belongs to the LpxC family. The cofactor is Zn(2+).

The enzyme catalyses a UDP-3-O-[(3R)-3-hydroxyacyl]-N-acetyl-alpha-D-glucosamine + H2O = a UDP-3-O-[(3R)-3-hydroxyacyl]-alpha-D-glucosamine + acetate. It participates in glycolipid biosynthesis; lipid IV(A) biosynthesis; lipid IV(A) from (3R)-3-hydroxytetradecanoyl-[acyl-carrier-protein] and UDP-N-acetyl-alpha-D-glucosamine: step 2/6. Functionally, catalyzes the hydrolysis of UDP-3-O-myristoyl-N-acetylglucosamine to form UDP-3-O-myristoylglucosamine and acetate, the committed step in lipid A biosynthesis. The protein is UDP-3-O-acyl-N-acetylglucosamine deacetylase of Ralstonia pickettii (strain 12J).